Reading from the N-terminus, the 147-residue chain is Large ribosomal subunit protein bL9 (147 aa).

Belongs to the bacterial ribosomal protein bL9 family.

Binds to the 23S rRNA. The polypeptide is Large ribosomal subunit protein bL9 (Campylobacter lari (strain RM2100 / D67 / ATCC BAA-1060)).